A 433-amino-acid polypeptide reads, in one-letter code: 3-phosphoshikimate 1-carboxyvinyltransferase (433 aa).

3-phosphoshikimate-binding residues include Lys-15, Ser-16, and Arg-20. Position 15 (Lys-15) interacts with phosphoenolpyruvate. Positions 96 and 124 each coordinate phosphoenolpyruvate. The 3-phosphoshikimate site is built by Ser-169, Gln-171, Ser-195, Asp-318, and Lys-345. Gln-171 contacts phosphoenolpyruvate. The active-site Proton acceptor is the Asp-318. 2 residues coordinate phosphoenolpyruvate: Arg-349 and Arg-393.

The protein belongs to the EPSP synthase family. As to quaternary structure, monomer.

The protein resides in the cytoplasm. It catalyses the reaction 3-phosphoshikimate + phosphoenolpyruvate = 5-O-(1-carboxyvinyl)-3-phosphoshikimate + phosphate. It participates in metabolic intermediate biosynthesis; chorismate biosynthesis; chorismate from D-erythrose 4-phosphate and phosphoenolpyruvate: step 6/7. Functionally, catalyzes the transfer of the enolpyruvyl moiety of phosphoenolpyruvate (PEP) to the 5-hydroxyl of shikimate-3-phosphate (S3P) to produce enolpyruvyl shikimate-3-phosphate and inorganic phosphate. The sequence is that of 3-phosphoshikimate 1-carboxyvinyltransferase from Pelodictyon phaeoclathratiforme (strain DSM 5477 / BU-1).